Here is a 457-residue protein sequence, read N- to C-terminus: Adenylyltransferase and sulfurtransferase MOCS3 (457 aa).

Positions 40–60 (ANGGGNGDGLADEGGERNTGT) are disordered. Residue Thr-63 is modified to Phosphothreonine. ATP is bound by residues Gly-102, Asp-123, 130–134 (SNFHR), Lys-147, and 191–192 (DN). 2 residues coordinate Zn(2+): Cys-233 and Cys-236. The Glycyl thioester intermediate; for adenylyltransferase activity role is filled by Cys-250. Cys-309 and Cys-312 together coordinate Zn(2+). One can recognise a Rhodanese domain in the interval 358-455 (ESQPHLLFDV…WTRKVDPDFP (98 aa)). The Cysteine persulfide intermediate; for sulfurtransferase activity role is filled by Cys-414.

In the N-terminal section; belongs to the HesA/MoeB/ThiF family. UBA4 subfamily. Zn(2+) serves as cofactor.

It localises to the cytoplasm. It is found in the cytosol. It carries out the reaction [molybdopterin-synthase sulfur-carrier protein]-C-terminal Gly-Gly + ATP + H(+) = [molybdopterin-synthase sulfur-carrier protein]-C-terminal Gly-Gly-AMP + diphosphate. The catalysed reaction is [molybdopterin-synthase sulfur-carrier protein]-C-terminal Gly-Gly-AMP + S-sulfanyl-L-cysteinyl-[cysteine desulfurase] + AH2 = [molybdopterin-synthase sulfur-carrier protein]-C-terminal-Gly-aminoethanethioate + L-cysteinyl-[cysteine desulfurase] + A + AMP + 2 H(+). Its pathway is tRNA modification; 5-methoxycarbonylmethyl-2-thiouridine-tRNA biosynthesis. The protein operates within cofactor biosynthesis; molybdopterin biosynthesis. Functionally, plays a central role in 2-thiolation of mcm(5)S(2)U at tRNA wobble positions of cytosolic tRNA(Lys), tRNA(Glu) and tRNA(Gln). Also essential during biosynthesis of the molybdenum cofactor. Acts by mediating the C-terminal thiocarboxylation of sulfur carriers URM1 and MOCS2A. Its N-terminus first activates URM1 and MOCS2A as acyl-adenylates (-COAMP), then the persulfide sulfur on the catalytic cysteine is transferred to URM1 and MOCS2A to form thiocarboxylation (-COSH) of their C-terminus. The reaction probably involves hydrogen sulfide that is generated from the persulfide intermediate and that acts as a nucleophile towards URM1 and MOCS2A. Subsequently, a transient disulfide bond is formed. Does not use thiosulfate as sulfur donor; NFS1 probably acting as a sulfur donor for thiocarboxylation reactions. This chain is Adenylyltransferase and sulfurtransferase MOCS3, found in Drosophila willistoni (Fruit fly).